Here is a 546-residue protein sequence, read N- to C-terminus: Chaperonin GroEL 2 (546 aa).

ATP is bound by residues 30-33 (TLGP), lysine 51, 87-91 (DGTTT), glycine 415, 479-481 (NAA), and aspartate 495.

Belongs to the chaperonin (HSP60) family. Forms a cylinder of 14 subunits composed of two heptameric rings stacked back-to-back. Interacts with the co-chaperonin GroES.

It is found in the cytoplasm. The enzyme catalyses ATP + H2O + a folded polypeptide = ADP + phosphate + an unfolded polypeptide.. In terms of biological role, together with its co-chaperonin GroES, plays an essential role in assisting protein folding. The GroEL-GroES system forms a nano-cage that allows encapsulation of the non-native substrate proteins and provides a physical environment optimized to promote and accelerate protein folding. The sequence is that of Chaperonin GroEL 2 from Chromobacterium violaceum (strain ATCC 12472 / DSM 30191 / JCM 1249 / CCUG 213 / NBRC 12614 / NCIMB 9131 / NCTC 9757 / MK).